A 97-amino-acid polypeptide reads, in one-letter code: UPF0213 protein YE0453 (97 aa).

Residues 4 to 79 enclose the GIY-YIG domain; sequence SLWHLYLLRT…KQLSKQQKEK (76 aa).

This sequence belongs to the UPF0213 family.

This chain is UPF0213 protein YE0453, found in Yersinia enterocolitica serotype O:8 / biotype 1B (strain NCTC 13174 / 8081).